The sequence spans 1259 residues: Zinc finger protein BRUTUS-like At1g74770 (1259 aa).

Residues 441–461 traverse the membrane as a helical segment; sequence LLYTSIHVLPLGLLKCVILWF. Composition is skewed to basic and acidic residues over residues 904–916 and 924–934; these read KEEK…ESKK and EGDKEQTDKMS. The segment at 904-938 is disordered; that stretch reads KEEKDLERSESKKICRGSNQEGDKEQTDKMSQKVS. The segment at 1018–1087 adopts a CHY-type zinc-finger fold; it reads PHSLIFGCNH…ANCSNTSCKS (70 aa). Zn(2+) is bound by residues cysteine 1025, histidine 1027, cysteine 1038, cysteine 1039, cysteine 1045, cysteine 1048, histidine 1049, histidine 1055, cysteine 1067, cysteine 1070, cysteine 1080, cysteine 1085, cysteine 1094, cysteine 1097, histidine 1108, cysteine 1109, cysteine 1112, cysteine 1115, histidine 1127, cysteine 1128, cysteine 1131, cysteine 1134, histidine 1142, and cysteine 1144. The CTCHY-type zinc-finger motif lies at 1089–1152; that stretch reads MGKYFCKICK…VCREKCLEDN (64 aa). The RING-type; atypical zinc-finger motif lies at 1153 to 1195; that stretch reads CPICHEYIFTSSSPVKALPCGHLMHSTCFQEYTCSHYTCPVCS.

Binds zinc and iron ions.

It is found in the membrane. The protein resides in the nucleus. It functions in the pathway protein modification; protein ubiquitination. Probable E3 ubiquitin-protein ligase that may regulate the response to iron deficiency and thus contributes to iron homeostasis. This Arabidopsis thaliana (Mouse-ear cress) protein is Zinc finger protein BRUTUS-like At1g74770.